Consider the following 387-residue polypeptide: Glucose-1-phosphate adenylyltransferase (387 aa).

Alpha-D-glucose 1-phosphate contacts are provided by residues tyrosine 99, glycine 164, 179–180 (EK), and serine 190.

The protein belongs to the bacterial/plant glucose-1-phosphate adenylyltransferase family. In terms of assembly, homotetramer.

The catalysed reaction is alpha-D-glucose 1-phosphate + ATP + H(+) = ADP-alpha-D-glucose + diphosphate. It functions in the pathway glycan biosynthesis; glycogen biosynthesis. Involved in the biosynthesis of ADP-glucose, a building block required for the elongation reactions to produce glycogen. Catalyzes the reaction between ATP and alpha-D-glucose 1-phosphate (G1P) to produce pyrophosphate and ADP-Glc. This chain is Glucose-1-phosphate adenylyltransferase, found in Geobacillus stearothermophilus (Bacillus stearothermophilus).